The chain runs to 309 residues: Ribosomal RNA small subunit methyltransferase H (309 aa).

S-adenosyl-L-methionine-binding positions include Gly-33–His-35, Asp-53, Phe-79, Asp-100, and Gln-107.

The protein belongs to the methyltransferase superfamily. RsmH family.

Its subcellular location is the cytoplasm. It catalyses the reaction cytidine(1402) in 16S rRNA + S-adenosyl-L-methionine = N(4)-methylcytidine(1402) in 16S rRNA + S-adenosyl-L-homocysteine + H(+). Functionally, specifically methylates the N4 position of cytidine in position 1402 (C1402) of 16S rRNA. The protein is Ribosomal RNA small subunit methyltransferase H of Clostridium botulinum (strain 657 / Type Ba4).